The primary structure comprises 694 residues: Two-component response regulator ORR25 (694 aa).

One can recognise a Response regulatory domain in the interval arginine 17 to tryptophan 132. Aspartate 68 is subject to 4-aspartylphosphate. The HTH myb-type domain occupies threonine 183–lysine 242. The H-T-H motif DNA-binding region spans proline 213–arginine 238. The segment at valine 326–lysine 349 is disordered. The segment covering glycine 333–alanine 347 has biased composition (polar residues).

This sequence belongs to the ARR family. Type-B subfamily. In terms of processing, two-component system major event consists of a His-to-Asp phosphorelay between a sensor histidine kinase (HK) and a response regulator (RR). In plants, the His-to-Asp phosphorelay involves an additional intermediate named Histidine-containing phosphotransfer protein (HPt). This multistep phosphorelay consists of a His-Asp-His-Asp sequential transfer of a phosphate group between first a His and an Asp of the HK protein, followed by the transfer to a conserved His of the HPt protein and finally the transfer to an Asp in the receiver domain of the RR protein.

It localises to the nucleus. In terms of biological role, transcriptional activator that binds specific DNA sequence. Functions as a response regulator involved in His-to-Asp phosphorelay signal transduction system. Phosphorylation of the Asp residue in the receiver domain activates the ability of the protein to promote the transcription of target genes. May directly activate some type-A response regulators in response to cytokinins. The chain is Two-component response regulator ORR25 from Oryza sativa subsp. japonica (Rice).